A 488-amino-acid polypeptide reads, in one-letter code: Aspartyl/glutamyl-tRNA(Asn/Gln) amidotransferase subunit B (488 aa).

The protein belongs to the GatB/GatE family. GatB subfamily. In terms of assembly, heterotrimer of A, B and C subunits.

It carries out the reaction L-glutamyl-tRNA(Gln) + L-glutamine + ATP + H2O = L-glutaminyl-tRNA(Gln) + L-glutamate + ADP + phosphate + H(+). The enzyme catalyses L-aspartyl-tRNA(Asn) + L-glutamine + ATP + H2O = L-asparaginyl-tRNA(Asn) + L-glutamate + ADP + phosphate + 2 H(+). Allows the formation of correctly charged Asn-tRNA(Asn) or Gln-tRNA(Gln) through the transamidation of misacylated Asp-tRNA(Asn) or Glu-tRNA(Gln) in organisms which lack either or both of asparaginyl-tRNA or glutaminyl-tRNA synthetases. The reaction takes place in the presence of glutamine and ATP through an activated phospho-Asp-tRNA(Asn) or phospho-Glu-tRNA(Gln). This is Aspartyl/glutamyl-tRNA(Asn/Gln) amidotransferase subunit B from Ralstonia pickettii (strain 12J).